Reading from the N-terminus, the 396-residue chain is 1-deoxy-D-xylulose 5-phosphate reductoisomerase (396 aa).

6 residues coordinate NADPH: Thr-15, Gly-16, Ser-17, Ile-18, Gly-41, and Asn-129. Lys-130 is a binding site for 1-deoxy-D-xylulose 5-phosphate. Glu-131 provides a ligand contact to NADPH. Residue Asp-155 coordinates Mn(2+). 1-deoxy-D-xylulose 5-phosphate is bound by residues Ser-156, Glu-157, Ser-182, and His-205. Glu-157 is a Mn(2+) binding site. Position 211 (Gly-211) interacts with NADPH. 1-deoxy-D-xylulose 5-phosphate contacts are provided by Ser-218, Asn-223, Lys-224, and Glu-227. Glu-227 contributes to the Mn(2+) binding site.

Belongs to the DXR family. It depends on Mg(2+) as a cofactor. Requires Mn(2+) as cofactor.

It carries out the reaction 2-C-methyl-D-erythritol 4-phosphate + NADP(+) = 1-deoxy-D-xylulose 5-phosphate + NADPH + H(+). Its pathway is isoprenoid biosynthesis; isopentenyl diphosphate biosynthesis via DXP pathway; isopentenyl diphosphate from 1-deoxy-D-xylulose 5-phosphate: step 1/6. Its function is as follows. Catalyzes the NADPH-dependent rearrangement and reduction of 1-deoxy-D-xylulose-5-phosphate (DXP) to 2-C-methyl-D-erythritol 4-phosphate (MEP). The chain is 1-deoxy-D-xylulose 5-phosphate reductoisomerase from Xanthomonas axonopodis pv. citri (strain 306).